The following is a 377-amino-acid chain: UPF0754 membrane protein GK0639 (377 aa).

2 helical membrane-spanning segments follow: residues Leu-7 to Val-27 and Tyr-357 to Leu-377.

It belongs to the UPF0754 family.

It localises to the cell membrane. The sequence is that of UPF0754 membrane protein GK0639 from Geobacillus kaustophilus (strain HTA426).